The primary structure comprises 242 residues: Segregation and condensation protein A (242 aa).

This sequence belongs to the ScpA family. As to quaternary structure, component of a cohesin-like complex composed of ScpA, ScpB and the Smc homodimer, in which ScpA and ScpB bind to the head domain of Smc. The presence of the three proteins is required for the association of the complex with DNA.

Its subcellular location is the cytoplasm. Participates in chromosomal partition during cell division. May act via the formation of a condensin-like complex containing Smc and ScpB that pull DNA away from mid-cell into both cell halves. The polypeptide is Segregation and condensation protein A (Lactococcus lactis subsp. cremoris (strain MG1363)).